A 411-amino-acid chain; its full sequence is Serine/threonine transporter SstT (411 aa).

The next 9 helical transmembrane spans lie at 14–34 (GSLVIQIIVGIVAGILLASVA), 43–63 (FLGGLFVSALKAVAPILVFIL), 82–102 (IIMLYLFGTLMAALTAVVMSF), 141–161 (ALMSGNFIGILAWAIALGFAL), 192–212 (IGIFGLVANTFAETGFAALAG), 218–238 (AVLLGSMAVIALVVNPAIVFF), 290–310 (IPLGATINMAGAAITITVLTL), 330–350 (VVAAVSACGASGVAGGSLLLI), and 357–377 (FGIPNEVAMQVVAVGFIIGVI).

Belongs to the dicarboxylate/amino acid:cation symporter (DAACS) (TC 2.A.23) family.

The protein resides in the cell inner membrane. It carries out the reaction L-serine(in) + Na(+)(in) = L-serine(out) + Na(+)(out). It catalyses the reaction L-threonine(in) + Na(+)(in) = L-threonine(out) + Na(+)(out). In terms of biological role, involved in the import of serine and threonine into the cell, with the concomitant import of sodium (symport system). In Photobacterium profundum (strain SS9), this protein is Serine/threonine transporter SstT.